Reading from the N-terminus, the 559-residue chain is Formate--tetrahydrofolate ligase (559 aa).

Residue 67 to 74 (TPAGEGKS) participates in ATP binding.

Belongs to the formate--tetrahydrofolate ligase family.

It catalyses the reaction (6S)-5,6,7,8-tetrahydrofolate + formate + ATP = (6R)-10-formyltetrahydrofolate + ADP + phosphate. It participates in one-carbon metabolism; tetrahydrofolate interconversion. This is Formate--tetrahydrofolate ligase from Lactobacillus delbrueckii subsp. bulgaricus (strain ATCC 11842 / DSM 20081 / BCRC 10696 / JCM 1002 / NBRC 13953 / NCIMB 11778 / NCTC 12712 / WDCM 00102 / Lb 14).